Consider the following 100-residue polypeptide: uncharacterized protein (100 aa).

A run of 3 helical transmembrane segments spans residues 9 to 29 (VYTY…SWVV), 41 to 61 (PYLI…ITAP), and 72 to 92 (SIPF…FLGI).

It localises to the membrane. This is an uncharacterized protein from Saccharomyces cerevisiae (strain ATCC 204508 / S288c) (Baker's yeast).